The chain runs to 508 residues: Amphoterin-induced protein 3 (508 aa).

A signal peptide spans 1-19 (MAWLVLLGLLLCMLGAGSG). Residues 20–383 (TSDLEGVLPP…PRPEPEAFNT (364 aa)) are Extracellular-facing. Residues 25 to 61 (GVLPPDPHNCPNKCVCAADVLSCAGRGLQDLPAALPA) enclose the LRRNT domain. Intrachain disulfides connect C34–C40 and C38–C47. LRR repeat units follow at residues 62-83 (TAAE…WLAP), 86-107 (RLRA…VFTN), 110-131 (GLRI…DLDG), 134-155 (ELEK…AFQG), 158-178 (MLSH…NHLH), and 184-207 (RLRT…AALP). N107 carries N-linked (GlcNAc...) asparagine glycosylation. Positions 219–275 (NPLPCDCSLYHLLRRWHQRGLSALHDFEREYTCLAFKVAESRVRFFEHSRVFKNCSV) constitute an LRRCT domain. Cystine bridges form between C223/C251, C225/C273, and C300/C352. N-linked (GlcNAc...) asparagine glycosylation is found at N272, N301, N362, and N368. An Ig-like C2-type domain is found at 279-370 (PGLELPEEEL…HNQTLEYNVS (92 aa)). A helical transmembrane segment spans residues 384-404 (GFTTLLGCIVGLVLVLLYLFA). Topologically, residues 405–508 (PPCRGCCRCC…STGSEGLMMS (104 aa)) are cytoplasmic.

It belongs to the immunoglobulin superfamily. AMIGO family. As to quaternary structure, binds AMIGO1 or AMIGO2.

It localises to the membrane. May mediate heterophilic cell-cell interaction. May contribute to signal transduction through its intracellular domain. This chain is Amphoterin-induced protein 3, found in Rattus norvegicus (Rat).